Consider the following 120-residue polypeptide: Ribonuclease P protein component 4 (120 aa).

Zn(2+)-binding residues include Cys68, Cys71, Cys97, and Cys100.

It belongs to the eukaryotic/archaeal RNase P protein component 4 family. In terms of assembly, consists of a catalytic RNA component and at least 5 protein subunits. Forms a heterodimeric subcomplex with Rnp1. Reconstituted enzyme missing individual protein subunits is suboptimally active, showing each subunit contributes to optimization of activity. Zn(2+) serves as cofactor.

It localises to the cytoplasm. It carries out the reaction Endonucleolytic cleavage of RNA, removing 5'-extranucleotides from tRNA precursor.. Part of ribonuclease P, a protein complex that generates mature tRNA molecules by cleaving their 5'-ends. Binds RNase P RNA. The sequence is that of Ribonuclease P protein component 4 from Pyrococcus horikoshii (strain ATCC 700860 / DSM 12428 / JCM 9974 / NBRC 100139 / OT-3).